The chain runs to 447 residues: Glucose-6-phosphate isomerase (447 aa).

The Proton donor role is filled by glutamate 289. Residues histidine 310 and lysine 424 contribute to the active site.

The protein belongs to the GPI family.

The protein localises to the cytoplasm. It catalyses the reaction alpha-D-glucose 6-phosphate = beta-D-fructose 6-phosphate. It participates in carbohydrate biosynthesis; gluconeogenesis. It functions in the pathway carbohydrate degradation; glycolysis; D-glyceraldehyde 3-phosphate and glycerone phosphate from D-glucose: step 2/4. Its function is as follows. Catalyzes the reversible isomerization of glucose-6-phosphate to fructose-6-phosphate. The sequence is that of Glucose-6-phosphate isomerase from Parabacteroides distasonis (strain ATCC 8503 / DSM 20701 / CIP 104284 / JCM 5825 / NCTC 11152).